A 225-amino-acid chain; its full sequence is Large ribosomal subunit protein uL1 (225 aa).

This sequence belongs to the universal ribosomal protein uL1 family. In terms of assembly, part of the 50S ribosomal subunit.

Binds directly to 23S rRNA. The L1 stalk is quite mobile in the ribosome, and is involved in E site tRNA release. Its function is as follows. Protein L1 is also a translational repressor protein, it controls the translation of the L11 operon by binding to its mRNA. This is Large ribosomal subunit protein uL1 from Rhodopirellula baltica (strain DSM 10527 / NCIMB 13988 / SH1).